Here is a 378-residue protein sequence, read N- to C-terminus: DNA replication and repair protein RecF (378 aa).

31–38 (GENGSGKT) contributes to the ATP binding site.

The protein belongs to the RecF family.

The protein resides in the cytoplasm. Functionally, the RecF protein is involved in DNA metabolism; it is required for DNA replication and normal SOS inducibility. RecF binds preferentially to single-stranded, linear DNA. It also seems to bind ATP. In Teredinibacter turnerae (strain ATCC 39867 / T7901), this protein is DNA replication and repair protein RecF.